Consider the following 290-residue polypeptide: MPSTREIRRRIRSVKNLAQITRAMEMVSASKMRRAQRNVLATRPYADRLLDVMGELTGRAVGMRRGTLLEVRPVVQGVALIVVTPDRGLAGSLVANVLRRASRFILDEQEKKHTVEVLAIGKKGRDFMVRTHQNLVAEVTKLGDHPRLTDILGISTHVINGFLGGRYDEVYVLYSQFVNTLVQRPTIKRLLPIDPPHEPAERMVDYTYEPSQEEVLRELLPRFVEVQLYQAVLEAIASEHSARMVAMRNATDNAKELQRDLTLSYNKTRQANITKEVSEIASGAAALAEM.

It belongs to the ATPase gamma chain family. In terms of assembly, F-type ATPases have 2 components, CF(1) - the catalytic core - and CF(0) - the membrane proton channel. CF(1) has five subunits: alpha(3), beta(3), gamma(1), delta(1), epsilon(1). CF(0) has three main subunits: a, b and c.

It is found in the cell membrane. Functionally, produces ATP from ADP in the presence of a proton gradient across the membrane. The gamma chain is believed to be important in regulating ATPase activity and the flow of protons through the CF(0) complex. This chain is ATP synthase gamma chain, found in Roseiflexus sp. (strain RS-1).